A 409-amino-acid chain; its full sequence is DEP domain-containing mTOR-interacting protein (409 aa).

Position 1 is an N-acetylmethionine (Met-1). Residues 1–10 (MEEGSSGGSG) are compositionally biased toward gly residues. Positions 1–23 (MEEGSSGGSGSSDSNAGGSGGVQ) are disordered. DEP domains follow at residues 36 to 119 (TGEQ…RFRK) and 146 to 219 (PETT…QFRM). Residues 217–235 (FRMNFRRRRRLMELLNETS) carry the DDEX motif motif. Ser-235 is subject to Phosphoserine. A Phosphothreonine modification is found at Thr-241. Phosphoserine occurs at positions 244 and 258. Thr-259 is modified (phosphothreonine). Residues Ser-263, Ser-265, Ser-280, Ser-282, Ser-283, Ser-286, and Ser-287 each carry the phosphoserine modification. A BetaTrCP degron motif motif is present at residues 286 to 291 (SSGYFS). At Tyr-289 the chain carries Phosphotyrosine. Residues Ser-291 and Ser-293 each carry the phosphoserine modification. Residue Thr-295 is modified to Phosphothreonine. Residues Ser-297, Ser-298, and Ser-299 each carry the phosphoserine modification. The region spanning 330-407 (TFTIVGDAVG…TIVMEVMEEL (78 aa)) is the PDZ domain.

In terms of assembly, associated component of the mechanistic target of rapamycin complex 1 (mTORC1) which contains MTOR, MLST8 and RPTOR. Associated component of the mechanistic target of rapamycin complex 2 (mTORC2) which contains MTOR, MLST8, PROTOR1, RICTOR, MAPKAP1 and DEPTOR. Interacts (via PDZ domain) with MTOR; interacts with MTOR within both mTORC1 and mTORC2. Interacts (via PDZ domain) with MINAR1 (via N-terminus). Interacts with SIK3. In terms of processing, phosphorylation weakens interaction with MTOR within mTORC1 and mTORC2. Phosphorylated at Ser-286, Ser-287 and Ser-291 in response to mitogenic stimulation by MTOR: DEPTOR is either directly phosphorylated by MTOR or indirectly via proteins kinases that are activated by MTOR, such as CK1/CSNK1A1. Phosphorylation at Ser-286, Ser-287 and Ser-291 promotes ubiquitination by the SCF(BTRC) complex, followed by degradation. Phosphorylation at Ser-235 by MAPK3/ERK1 promotes deubiquitination by USP7, enhancing its stability. Phosphorylation at Tyr-291 by SYK impairs its interaction with MTOR, promoting mTORC1 and mTORC2 signaling. Ubiquitinated; leading to proteasomal degradation. Ubiquitination by the SCF(BTRC) and SCF(FBXW11) complexes following phosphorylation at Ser-286, Ser-287 and Ser-291 by MTOR, leads to its degradation by the proteasome. Deubiquitinated by OTUB1 in response to amino acid via a non-canonical mechanism, leading to DEPTOR stability. Deubiquitinated by USP7 following phosphorylation at Ser-235, promoting its stability.

Its subcellular location is the lysosome membrane. Inhibited upon phosphatidic acid-binding: phosphatidic acid produced upon mitogenic stimulation promotes DEPTOR dissociatiom from the mTORC1 and mTORC2 complexes, leading to their activation. Specifically binds unsaturated phosphatidic acid, such as 16:0-18:1, 18:0-18:1 and di-18:1. Inhibited when nutrients are present via a feedback loop: phosphorylation by MTOR promotes DEPTOR ubiquitination and degradation. Negative regulator of the mTORC1 and mTORC2 complexes: inhibits the protein kinase activity of MTOR, thereby inactivating both complexes. DEPTOR inhibits mTORC1 and mTORC2 to induce autophagy. In contrast to AKT1S1/PRAS40, only partially inhibits mTORC1 activity. This is DEP domain-containing mTOR-interacting protein from Mus musculus (Mouse).